The primary structure comprises 424 residues: Histidine--tRNA ligase (424 aa).

Belongs to the class-II aminoacyl-tRNA synthetase family. In terms of assembly, homodimer.

The protein resides in the cytoplasm. It catalyses the reaction tRNA(His) + L-histidine + ATP = L-histidyl-tRNA(His) + AMP + diphosphate + H(+). The chain is Histidine--tRNA ligase from Marinomonas sp. (strain MWYL1).